Consider the following 233-residue polypeptide: MGEREEVKLLGTWYSPVVIRAKIALRLKSVDYDYVEEDLFGSKSELLLKSNPIFKKVPVLIHNTKPVCVSLNIVEYIDETWNSSGSSILPSHPYDRALARFWSVFVDDKWLPTLMAAVVAKSEEAKAKGMEEVEEGLLQLEAAFIALSKGKSFFGGETIGFIDICLGSFLVLLKAREKLKNEKILDELKTPSLYRWANQFLSNEMVKNVVPDIDKVAKFIEEFEDRAQYIRCF.

The 81-residue stretch at 5–85 (EEVKLLGTWY…YIDETWNSSG (81 aa)) folds into the GST N-terminal domain. Glutathione-binding positions include 15–16 (SP), 42–43 (SK), 56–57 (KV), and 69–70 (VS). One can recognise a GST C-terminal domain in the interval 92 to 219 (HPYDRALARF…VPDIDKVAKF (128 aa)). The residue at position 158 (threonine 158) is a Phosphothreonine.

It belongs to the GST superfamily. Tau family.

Its subcellular location is the cytoplasm. The protein localises to the cytosol. The catalysed reaction is RX + glutathione = an S-substituted glutathione + a halide anion + H(+). In terms of biological role, may be involved in the conjugation of reduced glutathione to a wide number of exogenous and endogenous hydrophobic electrophiles and have a detoxification role against certain herbicides. The chain is Glutathione S-transferase U15 (GSTU15) from Arabidopsis thaliana (Mouse-ear cress).